A 406-amino-acid chain; its full sequence is Formate-dependent phosphoribosylglycinamide formyltransferase (406 aa).

N(1)-(5-phospho-beta-D-ribosyl)glycinamide contacts are provided by residues 28-29 and Glu88; that span reads EL. ATP is bound by residues Arg121, Lys162, 167–172, 202–205, and Glu210; these read SSGKGQ and EGFI. Residues 126–320 enclose the ATP-grasp domain; the sequence is RLAAEELGCA…EFELHAKAIL (195 aa). Mg(2+)-binding residues include Glu279 and Glu291. N(1)-(5-phospho-beta-D-ribosyl)glycinamide contacts are provided by residues Asp298, Lys367, and 374–375; that span reads RR.

The protein belongs to the PurK/PurT family. In terms of assembly, homodimer.

It catalyses the reaction N(1)-(5-phospho-beta-D-ribosyl)glycinamide + formate + ATP = N(2)-formyl-N(1)-(5-phospho-beta-D-ribosyl)glycinamide + ADP + phosphate + H(+). The protein operates within purine metabolism; IMP biosynthesis via de novo pathway; N(2)-formyl-N(1)-(5-phospho-D-ribosyl)glycinamide from N(1)-(5-phospho-D-ribosyl)glycinamide (formate route): step 1/1. Functionally, involved in the de novo purine biosynthesis. Catalyzes the transfer of formate to 5-phospho-ribosyl-glycinamide (GAR), producing 5-phospho-ribosyl-N-formylglycinamide (FGAR). Formate is provided by PurU via hydrolysis of 10-formyl-tetrahydrofolate. In Janthinobacterium sp. (strain Marseille) (Minibacterium massiliensis), this protein is Formate-dependent phosphoribosylglycinamide formyltransferase.